The following is a 301-amino-acid chain: GTPase Era (301 aa).

Residues 7–175 (YCGFIAIVGR…AGIVRKHLPE (169 aa)) form the Era-type G domain. Residues 15-22 (GRPNVGKS) are G1. 15-22 (GRPNVGKS) provides a ligand contact to GTP. Positions 41-45 (QTTRH) are G2. Positions 62-65 (DTPG) are G3. Residues 62–66 (DTPGL) and 124–127 (NKVD) contribute to the GTP site. The G4 stretch occupies residues 124-127 (NKVD). Residues 154–156 (LSA) are G5. A KH type-2 domain is found at 198–283 (IREKLMRFLG…HLELWVKVKS (86 aa)).

The protein belongs to the TRAFAC class TrmE-Era-EngA-EngB-Septin-like GTPase superfamily. Era GTPase family. Monomer.

The protein resides in the cytoplasm. Its subcellular location is the cell inner membrane. Its function is as follows. An essential GTPase that binds both GDP and GTP, with rapid nucleotide exchange. Plays a role in 16S rRNA processing and 30S ribosomal subunit biogenesis and possibly also in cell cycle regulation and energy metabolism. The sequence is that of GTPase Era from Enterobacter sp. (strain 638).